The primary structure comprises 151 residues: uncharacterized protein (151 aa).

Residues 35 to 147 (GIFENERQKL…RETLQESLED (113 aa)) adopt a coiled-coil conformation.

This is an uncharacterized protein from Helicobacter hepaticus (strain ATCC 51449 / 3B1).